The sequence spans 196 residues: Protein/nucleic acid deglycase 3 (196 aa).

Cysteine 106 (nucleophile) is an active-site residue. Residue cysteine 106 is modified to Cysteine sulfinic acid (-SO2H); alternate.

The protein belongs to the peptidase C56 family. In terms of assembly, homodimer. Cys-106 is easily oxidized to sulfinic acid.

It catalyses the reaction N(omega)-(1-hydroxy-2-oxopropyl)-L-arginyl-[protein] + H2O = lactate + L-arginyl-[protein] + H(+). It carries out the reaction N(6)-(1-hydroxy-2-oxopropyl)-L-lysyl-[protein] + H2O = lactate + L-lysyl-[protein] + H(+). The enzyme catalyses S-(1-hydroxy-2-oxopropyl)-L-cysteinyl-[protein] + H2O = lactate + L-cysteinyl-[protein] + H(+). The catalysed reaction is N(omega)-(1-hydroxy-2-oxoethyl)-L-arginyl-[protein] + H2O = L-arginyl-[protein] + glycolate + H(+). It catalyses the reaction N(6)-(1-hydroxy-2-oxoethyl)-L-lysyl-[protein] + H2O = glycolate + L-lysyl-[protein] + H(+). It carries out the reaction S-(1-hydroxy-2-oxoethyl)-L-cysteinyl-[protein] + H2O = glycolate + L-cysteinyl-[protein] + H(+). The enzyme catalyses N(2)-(1-hydroxy-2-oxopropyl)-dGTP + H2O = lactate + dGTP + H(+). The catalysed reaction is N(2)-(1-hydroxy-2-oxopropyl)-GTP + H2O = lactate + GTP + H(+). It catalyses the reaction N(2)-(1-hydroxy-2-oxopropyl)-GDP + H2O = lactate + GDP + H(+). It carries out the reaction N(2)-(1-hydroxy-2-oxopropyl)-GMP + H2O = lactate + GMP + H(+). The enzyme catalyses N(2)-(1-hydroxy-2-oxoethyl)-dGTP + H2O = dGTP + glycolate + H(+). The catalysed reaction is N(2)-(1-hydroxy-2-oxoethyl)-GTP + H2O = glycolate + GTP + H(+). It catalyses the reaction N(2)-(1-hydroxy-2-oxoethyl)-GDP + H2O = glycolate + GDP + H(+). It carries out the reaction N(2)-(1-hydroxy-2-oxoethyl)-GMP + H2O = glycolate + GMP + H(+). The enzyme catalyses an N(2)-(1-hydroxy-2-oxopropyl)-guanosine in RNA + H2O = a guanosine in RNA + lactate + H(+). The catalysed reaction is an N(2)-(1-hydroxy-2-oxopropyl)-2'-deoxyguanosine in DNA + H2O = a 2'-deoxyguanosine in DNA + lactate + H(+). It catalyses the reaction an N(2)-(1-hydroxy-2-oxoethyl)-guanosine in RNA + H2O = a guanosine in RNA + glycolate + H(+). It carries out the reaction an N(2)-(1-hydroxy-2-oxoethyl)-2'-deoxyguanosine in DNA + H2O = a 2'-deoxyguanosine in DNA + glycolate + H(+). Its activity is regulated as follows. Glyoxalase activity is inhibited by zinc ions. Active as a chaperone in both its reduced and oxidized states, and is more active in its oxidized form. Its function is as follows. Protein and nucleotide deglycase that catalyzes the deglycation of the Maillard adducts formed between amino groups of proteins or nucleotides and reactive carbonyl groups of glyoxals. Thus, functions as a protein deglycase that repairs methylglyoxal- and glyoxal-glycated proteins, and releases repaired proteins and lactate or glycolate, respectively. Deglycates cysteine, arginine and lysine residues in proteins, and thus reactivates these proteins by reversing glycation by glyoxals. Is able to repair glycated serum albumin, collagen, glyceraldehyde-3-phosphate dehydrogenase, and fructose biphosphate aldolase. Acts on early glycation intermediates (hemithioacetals and aminocarbinols), preventing the formation of Schiff bases and advanced glycation endproducts (AGE) that cause irreversible damage. Also functions as a nucleotide deglycase able to repair glycated guanine in the free nucleotide pool (GTP, GDP, GMP, dGTP) and in DNA and RNA. Is thus involved in a major nucleotide repair system named guanine glycation repair (GG repair), dedicated to reversing methylglyoxal and glyoxal damage via nucleotide sanitization and direct nucleic acid repair. However, is less efficient than Hsp31 and YhbO, suggesting that YajL might be preferentially dedicated to protein repair. Displays a covalent chaperone activity with sulfenylated thiol proteins by forming mixed disulfides with members of the thiol proteome, and preferentially with sulfenylated cellular proteins, upon oxidative stress; these mixed disulfides can be subsequently reduced by low-molecular-weight thiols to regenerate YajL and reduced proteins. Involved in biogenesis of ribosomal proteins, probably as a ribosomal protein-folding chaperone. Confers resistance to oxidative stress. Plays an important role in protection against electrophile/carbonyl stress. The chaperone activity reported for YajL is probably recruited to execute its deglycase activity, to interact with non-native glycated proteins and gain access to partially buried glycated sites. Also displays an apparent glyoxalase activity that in fact reflects its deglycase activity. This chain is Protein/nucleic acid deglycase 3 (yajL), found in Escherichia coli (strain K12).